The following is a 172-amino-acid chain: Shikimate kinase 2 (172 aa).

9–16 (GARAAGKT) contributes to the ATP binding site.

This sequence belongs to the shikimate kinase family.

It is found in the cytoplasm. The catalysed reaction is shikimate + ATP = 3-phosphoshikimate + ADP + H(+). It participates in metabolic intermediate biosynthesis; chorismate biosynthesis; chorismate from D-erythrose 4-phosphate and phosphoenolpyruvate: step 5/7. In Syntrophotalea carbinolica (strain DSM 2380 / NBRC 103641 / GraBd1) (Pelobacter carbinolicus), this protein is Shikimate kinase 2.